The sequence spans 392 residues: Early estrogen-induced gene 1 protein (392 aa).

In terms of domain architecture, C2 NT-type spans 2–145; it reads AFLMKKKKFK…ILKVTIGMFL (144 aa). The tract at residues 129 to 138 is required for interaction with TNFRSF11A/RANK; it reads NTRQDNSILK. The interval 173-324 is disordered; that stretch reads LTCKGGGTSS…RKKDSVESHP (152 aa). The segment covering 183 to 194 has biased composition (low complexity); the sequence is GGSSSTNSLTGS. The segment covering 228–255 has biased composition (polar residues); the sequence is SRNSSYASQQSKLSGYSTEHSRSSSLSD. Residues 262 to 273 are compositionally biased toward low complexity; it reads TSTSSSASGGLS. Composition is skewed to basic and acidic residues over residues 281–300 and 307–324; these read GMEREHRPSEKPPRPPEKPP and HLSDRSFRRKKDSVESHP.

This sequence belongs to the EEIG family. As to quaternary structure, part of a complex composed of EEIG1, TNFRSF11A/RANK, PLCG2, GAB2, TEC and BTK; complex formation increases in the presence of TNFSF11/RANKL. Interacts with PRDM1/BLIMP1; following TNFSF11/RANKL stimulation in bone marrow-derived macrophages, the interaction promotes the binding of PRDM1/BLIMP1 to the gene promoter of IRF8. Interacts (via N-terminus) with TNFRSF11A/RANK (via cytoplasmic domain); when in the presence of TNFSF11/RANKL. In terms of tissue distribution, expressed during TNFSF11/RANKL-induced differentiation of bone marrow-derived macrophages to osteoclasts.

It is found in the nucleus. It localises to the cytoplasm. Its subcellular location is the membrane raft. In terms of biological role, key component of TNFSF11/RANKL- and TNF-induced osteoclastogenesis pathways, thereby mediates bone resorption in pathological bone loss conditions. Required for TNFSF11/RANKL-induced osteoclastogenesis via its interaction with TNFRSF11A/RANK, thereby facilitates the downsteam transcription of NFATC1 and activation of PLCG2. Facilitates recruitment of the transcriptional repressor PRDM1/BLIMP1 to the promoter of the anti-osteoclastogenesis gene IRF8, thereby resulting in transcription of osteoclast differentiation factors. May play a role in estrogen action. In Mus musculus (Mouse), this protein is Early estrogen-induced gene 1 protein (Eeig1).